The following is a 150-amino-acid chain: Globin-1 (150 aa).

One can recognise a Globin domain in the interval Ala-11–Tyr-150. 2 residues coordinate heme b: His-74 and His-106.

It belongs to the globin family. Monomer.

This chain is Globin-1, found in Petromyzon marinus (Sea lamprey).